A 128-amino-acid chain; its full sequence is Large ribosomal subunit protein bL12 (128 aa).

The protein belongs to the bacterial ribosomal protein bL12 family. As to quaternary structure, homodimer. Part of the ribosomal stalk of the 50S ribosomal subunit. Forms a multimeric L10(L12)X complex, where L10 forms an elongated spine to which 2 to 4 L12 dimers bind in a sequential fashion. Binds GTP-bound translation factors.

Functionally, forms part of the ribosomal stalk which helps the ribosome interact with GTP-bound translation factors. Is thus essential for accurate translation. The polypeptide is Large ribosomal subunit protein bL12 (Synechococcus sp. (strain CC9311)).